The chain runs to 312 residues: MANDNGIKHFIDLSTVPATELRAILEDAKARKARLKAGEVERPYAGKVLAMIFEKPSTRTRVSFDVGMRQLGGETIMLTGSEMQLGRSEAIADTAKVLSRYVDAIMIRTTAHERMLELAEYATVPVINALTDDTHPCQIMADVLTYEEHRGPIKGKTFAWMGDGNNVLHSLVEAAARFDFNVNIATPKGSEPKSQYIDWARANGAGIMSTTDPEKAASGADCIVTDTWVSMGQEDHARGHNVFIPYQVNANLMAKADPKALFMHCLPAHRGEEVTDEVIDGPQSVVFDEAENRLHAQKAILAWCLQDRGLGA.

Carbamoyl phosphate-binding positions include 57–60, Q84, R108, and 135–138; these read STRT and HPCQ. Residues N166, D226, and 230-231 contribute to the L-ornithine site; that span reads SM. Carbamoyl phosphate contacts are provided by residues 265-266 and R293; that span reads CL.

The protein belongs to the aspartate/ornithine carbamoyltransferase superfamily. OTCase family.

The protein resides in the cytoplasm. The catalysed reaction is carbamoyl phosphate + L-ornithine = L-citrulline + phosphate + H(+). Its pathway is amino-acid biosynthesis; L-arginine biosynthesis; L-arginine from L-ornithine and carbamoyl phosphate: step 1/3. In terms of biological role, reversibly catalyzes the transfer of the carbamoyl group from carbamoyl phosphate (CP) to the N(epsilon) atom of ornithine (ORN) to produce L-citrulline. The polypeptide is Ornithine carbamoyltransferase (Brucella suis biovar 1 (strain 1330)).